The primary structure comprises 205 residues: Small ribosomal subunit protein uS4 (205 aa).

The segment at 19–45 is disordered; sequence IWGRPKSPVNRREYGPGQHGQRRKGKL. Positions 94–157 constitute an S4 RNA-binding domain; sequence RRLDAVVYRA…KQLAFVLEAS (64 aa).

In terms of assembly, part of the 30S ribosomal subunit. Contacts protein S5. The interaction surface between S4 and S5 is involved in control of translational fidelity. May be methylated on an undetermined residue.

Its function is as follows. One of the primary rRNA binding proteins, it binds directly to 16S rRNA where it nucleates assembly of the body of the 30S subunit. In terms of biological role, with S5 and S12 plays an important role in translational accuracy. This is Small ribosomal subunit protein uS4 from Rhodopseudomonas palustris (strain ATCC BAA-98 / CGA009).